Here is a 478-residue protein sequence, read N- to C-terminus: UDP-N-acetylmuramate--L-alanine ligase (478 aa).

An ATP-binding site is contributed by 112-118; sequence GTHGKTT.

This sequence belongs to the MurCDEF family.

The protein localises to the cytoplasm. The enzyme catalyses UDP-N-acetyl-alpha-D-muramate + L-alanine + ATP = UDP-N-acetyl-alpha-D-muramoyl-L-alanine + ADP + phosphate + H(+). It participates in cell wall biogenesis; peptidoglycan biosynthesis. Cell wall formation. The polypeptide is UDP-N-acetylmuramate--L-alanine ligase (Polaromonas naphthalenivorans (strain CJ2)).